Reading from the N-terminus, the 671-residue chain is E3 ubiquitin-protein ligase pub2 (671 aa).

The C2 domain occupies 1-112; the sequence is MENIRFEVQL…KDDYKTRITL (112 aa). One can recognise a WW domain in the interval 242–275; it reads GPLPAGWEMRLSEDYHVYFVDHSTKTTTWSDPRD. One can recognise an HECT domain in the interval 338–671; it reads SVSDMKKKLL…IQETAGFGTE (334 aa). The active-site Glycyl thioester intermediate is the cysteine 639.

In terms of assembly, interacts with the E2 ubiquitin-conjugating enzyme ubc4.

The protein localises to the membrane. It is found in the cytoplasm. The enzyme catalyses S-ubiquitinyl-[E2 ubiquitin-conjugating enzyme]-L-cysteine + [acceptor protein]-L-lysine = [E2 ubiquitin-conjugating enzyme]-L-cysteine + N(6)-ubiquitinyl-[acceptor protein]-L-lysine.. The protein operates within protein modification; protein ubiquitination. Functionally, E3 ubiquitin-protein ligase which accepts ubiquitin from an E2 ubiquitin-conjugating enzyme in the form of a thioester and then directly transfers the ubiquitin to targeted substrates. The chain is E3 ubiquitin-protein ligase pub2 (pub2) from Schizosaccharomyces pombe (strain 972 / ATCC 24843) (Fission yeast).